Consider the following 225-residue polypeptide: Riboflavin kinase (225 aa).

The tract at residues 1-89 (MPDIKYLKKL…SRIFSPDLDI (89 aa)) is unknown. Positions 90–225 (LELEGKVLKG…LKKQGTENQK (136 aa)) are riboflavin kinase. Residue 99-104 (GLGEGQ) coordinates CDP. Residues Thr128 and Asn130 each coordinate Mg(2+). The FMN site is built by Thr185 and Glu193. Position 198–201 (198–201 (IKLR)) interacts with CDP.

The protein belongs to the archaeal riboflavin kinase family. It depends on Mg(2+) as a cofactor.

The enzyme catalyses riboflavin + CTP = CDP + FMN + H(+). The protein operates within cofactor biosynthesis; FMN biosynthesis; FMN from riboflavin (CTP route): step 1/1. Its function is as follows. Catalyzes the CTP-dependent phosphorylation of riboflavin (vitamin B2) to form flavin mononucleotide (FMN). The sequence is that of Riboflavin kinase (ribK) from Methanosarcina barkeri (strain Fusaro / DSM 804).